The primary structure comprises 1144 residues: MKLSRQFTVFGSAIFCVVIFSLYLMLDRGHLDYPRNPRREGSFPQGQLSMLQEKIDHLERLLAENNEIISNIRDSVINLSESVEDGPKSSQSNFSQGAGSHLLPSQLSLSVDTADCLFASQSGSHNSDVQMLDVYSLISFDNPDGGVWKQGFDITYESNEWDTEPLQVFVVPHSHNDPGWLKTFNDYFRDKTQYIFNNMVLKLKEDSRRKFIWSEISYLSKWWDIIDIQKKDAVKSLIENGQLEIVTGGWVMPDEATPHYFALIDQLIEGHQWLENNIGVKPRSGWAIDPFGHSPTMAYLLNRAGLSHMLIQRVHYAVKKHFALHKTLEFFWRQNWDLGSVTDILCHMMPFYSYDIPHTCGPDPKICCQFDFKRLPGGRFGCPWGVPPETIHPGNVQSRARMLLDQYRKKSKLFRTKVLLAPLGDDFRYCEYTEWDLQFKNYQQLFDYMNSQSKFKVKIQFGTLSDFFDALDKADETQRDKGQSMFPVLSGDFFTYADRDDHYWSGYFTSRPFYKRMDRIMESHLRAAEILYYFALRQAHKYKINKFLSSSLYTALTEARRNLGLFQHHDAITGTAKDWVVVDYGTRLFHSLMVLEKIIGNSAFLLILKDKLTYDSYSPDTFLEMDLKQKSQDSLPQKNIIRLSAEPRYLVVYNPLEQDRISLVSVYVSSPTVQVFSASGKPVEVQVSAVWDTANTISETAYEISFRAHIPPLGLKVYKILESASSNSHLADYVLYKNKVEDSGIFTIKNMINTEEGITLENSFVLLRFDQTGLMKQMMTKEDGKHHEVNVQFSWYGTTIKRDKSGAYLFLPDGNAKPYVYTTPPFVRVTHGRIYSEVTCFFDHVTHRVRLYHIQGIEGQSVEVSNIVDIRKVYNREIAMKISSDIKSQNRFYTDLNGYQIQPRMTLSKLPLQANVYPMTTMAYIQDAKHRLTLLSAQSLGVSSLNSGQIEVIMDRRLMQDDNRGLEQGIQDNKITANLFRILLEKRSAVNTEEEKKSVSYPSLLSHITSSLMNHPVIPMANKFSSPTLELQGEFSPLQSSLPCDIHLVNLRTIQSKVGNGHSNEAALILHRKGFDCRFSSKGTGLFCSTTQGKILVQKLLNKFIVESLTPSSLSLMHSPPGTQNISEINLSPMEISTFRIQLR.

Over 1–5 (MKLSR) the chain is Cytoplasmic. A helical; Signal-anchor for type II membrane protein transmembrane segment spans residues 6 to 26 (QFTVFGSAIFCVVIFSLYLML). Residues 27–1144 (DRGHLDYPRN…EISTFRIQLR (1118 aa)) are Lumenal-facing. N-linked (GlcNAc...) asparagine glycosylation occurs at Asn-78. Phosphoserine occurs at positions 80 and 82. Asn-93 is a glycosylation site (N-linked (GlcNAc...) asparagine). Residues His-175, Asp-177, Asp-289, and His-569 each coordinate Zn(2+). The active-site Nucleophile is Asp-289. Asn-1125 carries an N-linked (GlcNAc...) asparagine glycan.

The protein belongs to the glycosyl hydrolase 38 family. Homodimer; disulfide-linked. It depends on Zn(2+) as a cofactor. Post-translationally, glycosylated.

The protein resides in the golgi apparatus membrane. It carries out the reaction N(4)-{beta-D-GlcNAc-(1-&gt;2)-alpha-D-Man-(1-&gt;3)-[alpha-D-Man-(1-&gt;3)-[alpha-D-Man-(1-&gt;6)]-alpha-D-Man-(1-&gt;6)]-beta-D-Man-(1-&gt;4)-beta-D-GlcNAc-(1-&gt;4)-beta-D-GlcNAc}-L-asparaginyl-[protein] + 2 H2O = 2 alpha-D-mannopyranose + an N(4)-{beta-D-GlcNAc-(1-&gt;2)-alpha-D-Man-(1-&gt;3)-[alpha-D-Man-(1-&gt;6)]-beta-D-Man-(1-&gt;4)-beta-D-GlcNAc-(1-&gt;4)-beta-D-GlcNAc}-L-asparaginyl-[protein]. It participates in protein modification; protein glycosylation. Its function is as follows. Catalyzes the first committed step in the biosynthesis of complex N-glycans. It controls conversion of high mannose to complex N-glycans; the final hydrolytic step in the N-glycan maturation pathway. The protein is Alpha-mannosidase 2 (MAN2A1) of Homo sapiens (Human).